The sequence spans 313 residues: HPr kinase/phosphorylase (313 aa).

Active-site residues include H136 and K157. 151-158 contacts ATP; sequence GDSGIGKS. S158 is a Mg(2+) binding site. Catalysis depends on D175, which acts as the Proton acceptor; for phosphorylation activity. Proton donor; for dephosphorylation activity. Residues 199-208 are important for the catalytic mechanism of both phosphorylation and dephosphorylation; sequence LEIRGLGIIN. E200 contacts Mg(2+). R241 is a catalytic residue. The segment at 262–267 is important for the catalytic mechanism of dephosphorylation; it reads PVRPGR.

Belongs to the HPrK/P family. In terms of assembly, homohexamer. It depends on Mg(2+) as a cofactor.

The catalysed reaction is [HPr protein]-L-serine + ATP = [HPr protein]-O-phospho-L-serine + ADP + H(+). It carries out the reaction [HPr protein]-O-phospho-L-serine + phosphate + H(+) = [HPr protein]-L-serine + diphosphate. Catalyzes the ATP- as well as the pyrophosphate-dependent phosphorylation of a specific serine residue in HPr, a phosphocarrier protein of the phosphoenolpyruvate-dependent sugar phosphotransferase system (PTS). HprK/P also catalyzes the pyrophosphate-producing, inorganic phosphate-dependent dephosphorylation (phosphorolysis) of seryl-phosphorylated HPr (P-Ser-HPr). The two antagonistic activities of HprK/P are regulated by several intracellular metabolites, which change their concentration in response to the absence or presence of rapidly metabolisable carbon sources (glucose, fructose, etc.) in the growth medium. Therefore, by controlling the phosphorylation state of HPr, HPrK/P is a sensor enzyme that plays a major role in the regulation of carbon metabolism and sugar transport: it mediates carbon catabolite repression (CCR), and regulates PTS-catalyzed carbohydrate uptake and inducer exclusion. The chain is HPr kinase/phosphorylase from Staphylococcus saprophyticus subsp. saprophyticus (strain ATCC 15305 / DSM 20229 / NCIMB 8711 / NCTC 7292 / S-41).